Reading from the N-terminus, the 274-residue chain is Probable WRKY transcription factor 49 (274 aa).

The segment at residues 108–173 (NSNGMCDDGY…YEGFHFHYTY (66 aa)) is a DNA-binding region (WRKY). The disordered stretch occupies residues 188–228 (KTKIHKHNAQDMNKKSQTQEESKEAQLGELTNQNHPVNKAQ). Positions 193-222 (KHNAQDMNKKSQTQEESKEAQLGELTNQNH) form a coiled coil. Over residues 195–213 (NAQDMNKKSQTQEESKEAQ) the composition is skewed to basic and acidic residues. Polar residues predominate over residues 216–228 (ELTNQNHPVNKAQ).

This sequence belongs to the WRKY group II-c family.

Its subcellular location is the nucleus. Its function is as follows. Transcription factor. Interacts specifically with the W box (5'-(T)TGAC[CT]-3'), a frequently occurring elicitor-responsive cis-acting element. The polypeptide is Probable WRKY transcription factor 49 (WRKY49) (Arabidopsis thaliana (Mouse-ear cress)).